We begin with the raw amino-acid sequence, 288 residues long: HTH-type transcriptional regulator CzcR (288 aa).

Residues 1 to 58 (MELRDLQIFKCVAHHKSITGAAKELNYVQSNVTARIKQLENELKTPLFNRHKKGVSLS) form the HTH lysR-type domain. Positions 18–37 (ITGAAKELNYVQSNVTARIK) form a DNA-binding region, H-T-H motif.

It belongs to the LysR transcriptional regulatory family.

The protein is HTH-type transcriptional regulator CzcR (czcR) of Bacillus subtilis (strain 168).